Reading from the N-terminus, the 519-residue chain is uncharacterized protein (519 aa).

14 helical membrane-spanning segments follow: residues 37-57 (ISMS…AQLM), 82-102 (GQLS…ILIA), 114-134 (MFVL…FSYY), 146-166 (ALTG…LGRV), 175-195 (LIFA…SVFS), 209-229 (WTTA…IPHI), 240-260 (FDYL…FSWN), 269-289 (VPYV…FVLV), 309-329 (CVLI…YYLW), 337-357 (FATP…GCAA), 373-393 (IMVV…TAPI), 402-422 (FVSI…ATLM), 434-454 (IAAS…LGIA), and 475-495 (AWYM…LTVF).

It belongs to the major facilitator superfamily.

It is found in the endoplasmic reticulum. Its subcellular location is the membrane. This is an uncharacterized protein from Schizosaccharomyces pombe (strain 972 / ATCC 24843) (Fission yeast).